The primary structure comprises 395 residues: Elongation factor Tu (395 aa).

One can recognise a tr-type G domain in the interval 10–205; that stretch reads KPHCNIGTIG…AVDSYIPQPE (196 aa). Residues 19-26 form a G1 region; the sequence is GHVDHGKT. 19 to 26 contributes to the GTP binding site; it reads GHVDHGKT. Thr-26 provides a ligand contact to Mg(2+). The G2 stretch occupies residues 60 to 64; sequence GITIA. Residues 81–84 are G3; it reads DCPG. GTP-binding positions include 81–85 and 136–139; these read DCPGH and NKMD. Residues 136 to 139 are G4; it reads NKMD. A G5 region spans residues 173–175; that stretch reads SAL.

This sequence belongs to the TRAFAC class translation factor GTPase superfamily. Classic translation factor GTPase family. EF-Tu/EF-1A subfamily. As to quaternary structure, monomer.

The protein resides in the cytoplasm. It carries out the reaction GTP + H2O = GDP + phosphate + H(+). Its function is as follows. GTP hydrolase that promotes the GTP-dependent binding of aminoacyl-tRNA to the A-site of ribosomes during protein biosynthesis. The chain is Elongation factor Tu from Acidiphilium cryptum (strain JF-5).